Consider the following 130-residue polypeptide: Glycine cleavage system H protein (130 aa).

The Lipoyl-binding domain occupies 24–106; sequence TVTIGITDHA…YDEGWFFKVK (83 aa). The residue at position 65 (Lys65) is an N6-lipoyllysine.

Belongs to the GcvH family. As to quaternary structure, the glycine cleavage system is composed of four proteins: P, T, L and H. (R)-lipoate is required as a cofactor.

The glycine cleavage system catalyzes the degradation of glycine. The H protein shuttles the methylamine group of glycine from the P protein to the T protein. The protein is Glycine cleavage system H protein of Teredinibacter turnerae (strain ATCC 39867 / T7901).